The chain runs to 364 residues: Rhomboid domain-containing protein 2 (364 aa).

Transmembrane regions (helical) follow at residues 11-31 (WCLC…SLLV), 63-83 (LVTY…AIII), 100-120 (CFFT…FEAV), 158-178 (FGMV…SWLI), and 184-204 (LSNV…CYSI). Disordered regions lie at residues 242 to 282 (AQSR…KLAS) and 317 to 364 (SSVY…VPMP). Composition is skewed to polar residues over residues 267–276 (HPVSQTQHAS) and 317–329 (SSVY…TSLG).

This sequence belongs to the peptidase S54 family.

Its subcellular location is the golgi apparatus. It is found in the cis-Golgi network membrane. This Homo sapiens (Human) protein is Rhomboid domain-containing protein 2 (RHBDD2).